The chain runs to 179 residues: ATP-dependent protease subunit HslV (179 aa).

T6 is a catalytic residue. The Na(+) site is built by S164, C167, and T170.

It belongs to the peptidase T1B family. HslV subfamily. A double ring-shaped homohexamer of HslV is capped on each side by a ring-shaped HslU homohexamer. The assembly of the HslU/HslV complex is dependent on binding of ATP.

It localises to the cytoplasm. The catalysed reaction is ATP-dependent cleavage of peptide bonds with broad specificity.. Allosterically activated by HslU binding. Its function is as follows. Protease subunit of a proteasome-like degradation complex believed to be a general protein degrading machinery. This is ATP-dependent protease subunit HslV from Listeria monocytogenes serotype 4b (strain CLIP80459).